The following is a 274-amino-acid chain: 2,3,4,5-tetrahydropyridine-2,6-dicarboxylate N-succinyltransferase (274 aa).

2 residues coordinate substrate: R106 and D143.

Belongs to the transferase hexapeptide repeat family. As to quaternary structure, homotrimer.

The protein resides in the cytoplasm. It catalyses the reaction (S)-2,3,4,5-tetrahydrodipicolinate + succinyl-CoA + H2O = (S)-2-succinylamino-6-oxoheptanedioate + CoA. Its pathway is amino-acid biosynthesis; L-lysine biosynthesis via DAP pathway; LL-2,6-diaminopimelate from (S)-tetrahydrodipicolinate (succinylase route): step 1/3. The chain is 2,3,4,5-tetrahydropyridine-2,6-dicarboxylate N-succinyltransferase from Acidovorax sp. (strain JS42).